The chain runs to 1365 residues: Nuclear pore complex protein Nup154 (1365 aa).

Residues 1 to 508 (MTLPQAQLDF…GTHIIEVLKM (508 aa)) are required for binding to Nup93-1 and anchoring to the nuclear pore complex. The tract at residues 508 to 986 (MVDVLRQILL…KSINPLKGTA (479 aa)) is required for binding to chromatin.

The protein belongs to the non-repetitive/WGA-negative nucleoporin family. As to quaternary structure, interacts (via N-terminus) with Nup93-1. Interacts with Nup35. Interacts with cup.

The protein resides in the nucleus. The protein localises to the nuclear pore complex. Its subcellular location is the chromosome. It localises to the nucleus membrane. It is found in the cytoplasm. Its function is as follows. Component of the nuclear pore complex. Has a role in the organization of the inner nuclear membrane proteins at the nuclear envelope. In germ cells, plays a role in the nuclear localization of components of the dpp signaling pathways, such as Medea and phosphorylated Mad. Binds to chromatin, and together with Nup62 and Nup93-1, contributes to karyosome morphology and chromatin organization including attachment to the nuclear envelope in oocytes and nurse cells. Has a role in female fertility including egg chamber development; in nurse cells, has a role in the organization of F-actin in subcortical and cytoplasmic actin filaments important for the transfer of cytoplasm from nurse cells to the growing oocytes. Has a role in male spermatogenesis and fertility. Has a role in germ line cell proliferation. This is Nuclear pore complex protein Nup154 from Drosophila melanogaster (Fruit fly).